Consider the following 88-residue polypeptide: Small ribosomal subunit protein bS18 (88 aa).

The interval 1-22 is disordered; the sequence is MSTKNAKPKKEAQRRPSRKAKV.

Belongs to the bacterial ribosomal protein bS18 family. Part of the 30S ribosomal subunit. Forms a tight heterodimer with protein bS6.

Its function is as follows. Binds as a heterodimer with protein bS6 to the central domain of the 16S rRNA, where it helps stabilize the platform of the 30S subunit. The sequence is that of Small ribosomal subunit protein bS18 (rpsR) from Thermus thermophilus (strain ATCC BAA-163 / DSM 7039 / HB27).